Reading from the N-terminus, the 227-residue chain is 7-cyano-7-deazaguanine synthase (227 aa).

ATP is bound at residue 8-18 (LSGGTDSATVL). Cysteine 192, cysteine 202, cysteine 205, and cysteine 208 together coordinate Zn(2+).

The protein belongs to the QueC family. The cofactor is Zn(2+).

It carries out the reaction 7-carboxy-7-deazaguanine + NH4(+) + ATP = 7-cyano-7-deazaguanine + ADP + phosphate + H2O + H(+). The protein operates within purine metabolism; 7-cyano-7-deazaguanine biosynthesis. Catalyzes the ATP-dependent conversion of 7-carboxy-7-deazaguanine (CDG) to 7-cyano-7-deazaguanine (preQ(0)). The sequence is that of 7-cyano-7-deazaguanine synthase from Rickettsia prowazekii (strain Madrid E).